The primary structure comprises 331 residues: Probable allantoicase (331 aa).

Belongs to the allantoicase family.

It carries out the reaction allantoate + H2O = (S)-ureidoglycolate + urea. Its pathway is nitrogen metabolism; (S)-allantoin degradation; (S)-ureidoglycolate from allantoate (aminidohydrolase route): step 1/1. This chain is Probable allantoicase, found in Pseudomonas savastanoi pv. phaseolicola (strain 1448A / Race 6) (Pseudomonas syringae pv. phaseolicola (strain 1448A / Race 6)).